The sequence spans 492 residues: Spindle assembly abnormal protein 6 (492 aa).

A PISA domain is found at 46–98 (SGEKELKFEISRSDDFEFLFSETLNNEKYQILARDHDLTVDFDAFPKVIIQHL). A coiled-coil region spans residues 192–407 (KSADELASLR…KIAHYRAQRF (216 aa)).

In terms of assembly, nine homodimers form a cartwheel structure with an internal diameter of 23 nM and radial spokes connecting to the microtubule triplets. Interacts with sas-5.

The protein localises to the cytoplasm. Its subcellular location is the cytoskeleton. It localises to the microtubule organizing center. The protein resides in the centrosome. It is found in the centriole. Its function is as follows. Central scaffolding component of the centrioles ensuring their 9-fold symmetry. Required for centrosome biogenesis and duplication. In Caenorhabditis elegans, this protein is Spindle assembly abnormal protein 6.